Reading from the N-terminus, the 253-residue chain is Chitooligosaccharide deacetylase (253 aa).

H61 and H126 together coordinate Mg(2+).

The protein belongs to the YdjC deacetylase family. ChbG subfamily. As to quaternary structure, homodimer. Requires Mg(2+) as cofactor.

It is found in the cytoplasm. The enzyme catalyses N,N'-diacetylchitobiose + H2O = N-acetyl-beta-D-glucosaminyl-(1-&gt;4)-D-glucosamine + acetate. The catalysed reaction is diacetylchitobiose-6'-phosphate + H2O = N'-monoacetylchitobiose-6'-phosphate + acetate. It participates in glycan degradation; chitin degradation. Involved in the degradation of chitin. ChbG is essential for growth on the acetylated chitooligosaccharides chitobiose and chitotriose but is dispensable for growth on cellobiose and chitosan dimer, the deacetylated form of chitobiose. Deacetylation of chitobiose-6-P and chitotriose-6-P is necessary for both the activation of the chb promoter by the regulatory protein ChbR and the hydrolysis of phosphorylated beta-glucosides by the phospho-beta-glucosidase ChbF. Catalyzes the removal of only one acetyl group from chitobiose-6-P to yield monoacetylchitobiose-6-P, the inducer of ChbR and the substrate of ChbF. The polypeptide is Chitooligosaccharide deacetylase (Serratia marcescens).